Reading from the N-terminus, the 357-residue chain is Acyl-CoA Delta12-desaturase (357 aa).

2 helical membrane-spanning segments follow: residues 49–69 and 72–92; these read VLWFVLLHAGALYGVYLIFAS and IYTTLYGFLLCELSLLSITAG. 5 residues coordinate Fe cation: H94, H99, H131, H134, and H135. The Histidine box-1 motif lies at 94–99; that stretch reads HRLWAH. Positions 131–135 match the Histidine box-2 motif; it reads HRVHH. 2 consecutive transmembrane segments (helical) span residues 195–215 and 223–245; these read LVPFVSFVIPTLIPMYFWGET and STMFRYCLSLNLTWLVNSAAHMW. Residues H243, H272, H275, and H276 each contribute to the Fe cation site. The Histidine box-3 motif lies at 272 to 276; the sequence is HNFHH.

Belongs to the fatty acid desaturase type 1 family. Requires Fe(2+) as cofactor.

It is found in the membrane. The catalysed reaction is (9Z)-octadecenoyl-CoA + 2 Fe(II)-[cytochrome b5] + O2 + 2 H(+) = (9Z,12Z)-octadecadienoyl-CoA + 2 Fe(III)-[cytochrome b5] + 2 H2O. It carries out the reaction (9Z)-hexadecenoyl-CoA + 2 Fe(II)-[cytochrome b5] + O2 + 2 H(+) = (9Z,12Z)-hexadecadienoyl-CoA + 2 Fe(III)-[cytochrome b5] + 2 H2O. It catalyses the reaction hexadecanoyl-CoA + 2 Fe(II)-[cytochrome b5] + O2 + 2 H(+) = (9Z)-hexadecenoyl-CoA + 2 Fe(III)-[cytochrome b5] + 2 H2O. In terms of biological role, catalyzes the formation of a Delta12 double bond, acting on monounsaturated fatty acyl substrates like palmitoleoyl-CoA ((9Z)-hexadecenoyl-CoA) and oleoyl-CoA ((9Z)-octadecenoyl-CoA) with higher desaturation activity on (9Z)-octadecenoyl-CoA than (9Z)-hexadecenoyl-CoA. Requires preexisting cis double bond at the Delta9 position of fatty acyls to be able to insert the Delta12 double bond. Delta12-desaturation of (9Z)-octadecenoyl-CoA in insects produces (9Z,12Z)-octadecadienoyl-CoA (linoleoyl-CoA) which may be used to supply precursors of crucial mediators of immunity and reproduction and other essential functions. Can also catalyze Delta9-desaturation on saturated fatty acyl substrates like palmitoyl-CoA (hexadecanoyl-CoA) but with lower efficiency. This chain is Acyl-CoA Delta12-desaturase, found in Acheta domesticus (House cricket).